Here is a 201-residue protein sequence, read N- to C-terminus: Recombination protein RecR (201 aa).

Residues 57 to 74 form a C4-type zinc finger; the sequence is CSICGNITATDTDPCVIC. The Toprim domain occupies 82 to 178; sequence STVFVVENSR…AVTRLAHGLA (97 aa).

The protein belongs to the RecR family.

Functionally, may play a role in DNA repair. It seems to be involved in an RecBC-independent recombinational process of DNA repair. It may act with RecF and RecO. This is Recombination protein RecR from Leuconostoc mesenteroides subsp. mesenteroides (strain ATCC 8293 / DSM 20343 / BCRC 11652 / CCM 1803 / JCM 6124 / NCDO 523 / NBRC 100496 / NCIMB 8023 / NCTC 12954 / NRRL B-1118 / 37Y).